The chain runs to 874 residues: Cyanophycin synthetase (874 aa).

The region spanning 224-480 (KTTLAEAGIP…VAAPVIDMLF (257 aa)) is the ATP-grasp domain. 495–501 (GTNGKTT) contributes to the ATP binding site.

It in the C-terminal section; belongs to the MurCDEF family. Homodimer.

It carries out the reaction [L-4-(L-arginin-2-N-yl)aspartate](n) + L-aspartate + ATP = [L-4-(L-arginin-2-N-yl)aspartate](n)-L-aspartate + ADP + phosphate + H(+). The catalysed reaction is [L-4-(L-arginin-2-N-yl)aspartate](n)-L-aspartate + L-arginine + ATP = [L-4-(L-arginin-2-N-yl)aspartate](n+1) + ADP + phosphate + H(+). Functionally, catalyzes the ATP-dependent polymerization of arginine and aspartate to multi-L-arginyl-poly-L-aspartic acid (cyanophycin; a water-insoluble reserve polymer). The polypeptide is Cyanophycin synthetase (cphA) (Geminocystis herdmanii (strain PCC 6308) (Synechocystis sp. (strain PCC 6308))).